We begin with the raw amino-acid sequence, 113 residues long: T cell receptor alpha variable 5 (113 aa).

The first 22 residues, 1–22, serve as a signal peptide directing secretion; that stretch reads MKTFAGFSFLFLWLQLDCMSRG. The region spanning 23–113 is the Ig-like domain; that stretch reads EDVEQSLFLS…DSAIYFCAES (91 aa). Asn42 carries N-linked (GlcNAc...) asparagine glycosylation. Residues Cys43 and Cys110 are joined by a disulfide bond.

Alpha-beta TR is a heterodimer composed of an alpha and beta chain; disulfide-linked. The alpha-beta TR is associated with the transmembrane signaling CD3 coreceptor proteins to form the TR-CD3 (TcR or TCR). The assembly of alpha-beta TR heterodimers with CD3 occurs in the endoplasmic reticulum where a single alpha-beta TR heterodimer associates with one CD3D-CD3E heterodimer, one CD3G-CD3E heterodimer and one CD247 homodimer forming a stable octameric structure. CD3D-CD3E and CD3G-CD3E heterodimers preferentially associate with TR alpha and TR beta chains, respectively. The association of the CD247 homodimer is the last step of TcR assembly in the endoplasmic reticulum and is required for transport to the cell surface.

The protein localises to the cell membrane. Its function is as follows. V region of the variable domain of T cell receptor (TR) alpha chain that participates in the antigen recognition. Alpha-beta T cell receptors are antigen specific receptors which are essential to the immune response and are present on the cell surface of T lymphocytes. Recognize peptide-major histocompatibility (MH) (pMH) complexes that are displayed by antigen presenting cells (APC), a prerequisite for efficient T cell adaptive immunity against pathogens. Binding of alpha-beta TR to pMH complex initiates TR-CD3 clustering on the cell surface and intracellular activation of LCK that phosphorylates the ITAM motifs of CD3G, CD3D, CD3E and CD247 enabling the recruitment of ZAP70. In turn ZAP70 phosphorylates LAT, which recruits numerous signaling molecules to form the LAT signalosome. The LAT signalosome propagates signal branching to three major signaling pathways, the calcium, the mitogen-activated protein kinase (MAPK) kinase and the nuclear factor NF-kappa-B (NF-kB) pathways, leading to the mobilization of transcription factors that are critical for gene expression and essential for T cell growth and differentiation. The T cell repertoire is generated in the thymus, by V-(D)-J rearrangement. This repertoire is then shaped by intrathymic selection events to generate a peripheral T cell pool of self-MH restricted, non-autoaggressive T cells. Post-thymic interaction of alpha-beta TR with the pMH complexes shapes TR structural and functional avidity. The protein is T cell receptor alpha variable 5 of Homo sapiens (Human).